The following is a 217-amino-acid chain: MRIILLGPPGAGKGTQAQLICKRYNIPQISTGDMLRAAIREGTELGLKAKSVMESGGLVSDELIIGLVKERIAQPDCVNGCIFDGFPRTIPQAEALEKEGISIDHVIEIDVPDEEIVKRLSGRRQHPASGRVYHVVYNPPKVEGKDDETGEDLVQRPDDQEETIRKRLASYHTETEQLVGFYQGRAASGENAPTYDKLDGLRTIEDVQKDLFNILDK.

Residue 10-15 (GAGKGT) coordinates ATP. The tract at residues 30–59 (STGDMLRAAIREGTELGLKAKSVMESGGLV) is NMP. AMP is bound by residues Thr-31, Arg-36, 57-59 (GLV), 85-88 (GFPR), and Gln-92. The tract at residues 122–159 (GRRQHPASGRVYHVVYNPPKVEGKDDETGEDLVQRPDD) is LID. Residues Arg-123 and 132–133 (VY) contribute to the ATP site. Positions 156 and 167 each coordinate AMP. Arg-202 contributes to the ATP binding site.

Belongs to the adenylate kinase family. Monomer.

Its subcellular location is the cytoplasm. The enzyme catalyses AMP + ATP = 2 ADP. The protein operates within purine metabolism; AMP biosynthesis via salvage pathway; AMP from ADP: step 1/1. Catalyzes the reversible transfer of the terminal phosphate group between ATP and AMP. Plays an important role in cellular energy homeostasis and in adenine nucleotide metabolism. The sequence is that of Adenylate kinase from Acinetobacter baumannii (strain AB307-0294).